The primary structure comprises 395 residues: Proteinase-activated receptor 4 (395 aa).

The first 16 residues, 1–16 (MCWPLLYPLMLGFSIS), serve as a signal peptide directing secretion. The propeptide at 17–58 (PAECQTPSIYDDVESTREGQEASLRPTVELNESKSPDKPNPR) is removed for receptor activation. Positions 46 to 66 (LNESKSPDKPNPRGFPGKPCA) are disordered. Basic and acidic residues predominate over residues 47–56 (NESKSPDKPN). The Extracellular segment spans residues 59-93 (GFPGKPCANNSDTLELPASSEALLLGWVPTRLVPA). Asparagine 67 carries N-linked (GlcNAc...) asparagine glycosylation. The helical transmembrane segment at 94-114 (IYGLVVVVGLPANGLALWVLA) threads the bilayer. Over 115–119 (TRVPR) the chain is Cytoplasmic. A helical transmembrane segment spans residues 120–140 (LPSTILLMNLAVADLLLALVL). The Extracellular portion of the chain corresponds to 141–161 (PPRLVYHLRGQRWPFGEAACR). Cysteine 160 and cysteine 239 form a disulfide bridge. Residues 162-182 (VATAALYGHMYGSVLLLAAVS) form a helical membrane-spanning segment. Topologically, residues 183–203 (LDRYLALVHSLRARALRGQRL) are cytoplasmic. The helical transmembrane segment at 204-224 (TTILCLVAWLSAATLVLPLTF) threads the bilayer. Residues 225-254 (HRQTFLLAGSDRMLCHDALPLAEQTSHWRP) are Extracellular-facing. The helical transmembrane segment at 255 to 275 (AFICLAVLGCFVPLLAMVLCY) threads the bilayer. Over 276–295 (GATLRALAANGQRYSHAVRL) the chain is Cytoplasmic. A helical transmembrane segment spans residues 296–316 (TALVLFSAVAAFTPSNVLLVL). The Extracellular segment spans residues 317 to 330 (HYSNPSPEAWGNLY). Residues 331-354 (GAYVPSLALSTLNSCVDPFIYYYV) form a helical membrane-spanning segment. Over 355–395 (SHEFREKVRAMLCRQLKASSSSQASREAGSRGTAICSSTLL) the chain is Cytoplasmic.

It belongs to the G-protein coupled receptor 1 family. Post-translationally, a proteolytic cleavage generates a new N-terminus that functions as a tethered ligand.

The protein resides in the cell membrane. In terms of biological role, receptor for activated thrombin or trypsin coupled to G proteins that stimulate phosphoinositide hydrolysis. May play a role in platelets activation. In Rattus norvegicus (Rat), this protein is Proteinase-activated receptor 4 (F2rl3).